The primary structure comprises 315 residues: Probable cytochrome c oxidase subunit 2 (315 aa).

The next 3 helical transmembrane spans lie at Ile-54 to Trp-74, Leu-96 to Ile-116, and Val-133 to Pro-153. 4 residues coordinate Cu cation: His-235, Cys-270, Cys-274, and His-278.

It belongs to the cytochrome c oxidase subunit 2 family. Requires Cu cation as cofactor. Heme is required as a cofactor.

It localises to the cell membrane. It catalyses the reaction 4 Fe(II)-[cytochrome c] + O2 + 8 H(+)(in) = 4 Fe(III)-[cytochrome c] + 2 H2O + 4 H(+)(out). Its function is as follows. Subunits I and II form the functional core of the enzyme complex. Electrons originating in cytochrome c are transferred via heme a and Cu(A) to the binuclear center formed by heme a3 and Cu(B). The polypeptide is Probable cytochrome c oxidase subunit 2 (ctaC) (Rickettsia conorii (strain ATCC VR-613 / Malish 7)).